Here is a 201-residue protein sequence, read N- to C-terminus: Recombination protein RecR (201 aa).

A C4-type zinc finger spans residues 60–75; that stretch reads CATCGNFDTVQPCAVC. One can recognise a Toprim domain in the interval 83–178; the sequence is GIICVVEDVP…DVTRLAHGVP (96 aa).

Belongs to the RecR family.

Functionally, may play a role in DNA repair. It seems to be involved in an RecBC-independent recombinational process of DNA repair. It may act with RecF and RecO. The chain is Recombination protein RecR from Hyphomonas neptunium (strain ATCC 15444).